The following is a 254-amino-acid chain: Phosphoribosylaminoimidazole-succinocarboxamide synthase (254 aa).

Belongs to the SAICAR synthetase family.

It catalyses the reaction 5-amino-1-(5-phospho-D-ribosyl)imidazole-4-carboxylate + L-aspartate + ATP = (2S)-2-[5-amino-1-(5-phospho-beta-D-ribosyl)imidazole-4-carboxamido]succinate + ADP + phosphate + 2 H(+). It functions in the pathway purine metabolism; IMP biosynthesis via de novo pathway; 5-amino-1-(5-phospho-D-ribosyl)imidazole-4-carboxamide from 5-amino-1-(5-phospho-D-ribosyl)imidazole-4-carboxylate: step 1/2. The protein is Phosphoribosylaminoimidazole-succinocarboxamide synthase of Rhodospirillum centenum (strain ATCC 51521 / SW).